Here is a 1317-residue protein sequence, read N- to C-terminus: DNA-directed RNA polymerase subunit beta' (1317 aa).

Zn(2+)-binding residues include cysteine 60, cysteine 62, cysteine 75, and cysteine 78. Residues aspartate 535, aspartate 537, and aspartate 539 each contribute to the Mg(2+) site. 4 residues coordinate Zn(2+): cysteine 890, cysteine 967, cysteine 974, and cysteine 977.

The protein belongs to the RNA polymerase beta' chain family. In terms of assembly, the RNAP catalytic core consists of 2 alpha, 1 beta, 1 beta' and 1 omega subunit. When a sigma factor is associated with the core the holoenzyme is formed, which can initiate transcription. Requires Mg(2+) as cofactor. Zn(2+) serves as cofactor.

The enzyme catalyses RNA(n) + a ribonucleoside 5'-triphosphate = RNA(n+1) + diphosphate. In terms of biological role, DNA-dependent RNA polymerase catalyzes the transcription of DNA into RNA using the four ribonucleoside triphosphates as substrates. The polypeptide is DNA-directed RNA polymerase subunit beta' (Mycolicibacterium smegmatis (strain ATCC 700084 / mc(2)155) (Mycobacterium smegmatis)).